The primary structure comprises 539 residues: Eukaryotic translation initiation factor 3 subunit L (539 aa).

A PCI domain is found at 306–514; the sequence is TFSDILLYIQ…IHIADTKVSH (209 aa).

It belongs to the eIF-3 subunit L family. In terms of assembly, component of the eukaryotic translation initiation factor 3 (eIF-3) complex. The eIF-3 complex interacts with pix.

It localises to the cytoplasm. Component of the eukaryotic translation initiation factor 3 (eIF-3) complex, which is involved in protein synthesis of a specialized repertoire of mRNAs and, together with other initiation factors, stimulates binding of mRNA and methionyl-tRNAi to the 40S ribosome. The eIF-3 complex specifically targets and initiates translation of a subset of mRNAs involved in cell proliferation. This chain is Eukaryotic translation initiation factor 3 subunit L, found in Drosophila ananassae (Fruit fly).